We begin with the raw amino-acid sequence, 323 residues long: tRNA U34 carboxymethyltransferase (323 aa).

Residues Lys-91, Trp-105, Lys-110, Gly-130, 152 to 154, 181 to 182, Met-196, Tyr-200, and Arg-315 contribute to the carboxy-S-adenosyl-L-methionine site; these read DPT and IE.

It belongs to the class I-like SAM-binding methyltransferase superfamily. CmoB family. As to quaternary structure, homotetramer.

It catalyses the reaction carboxy-S-adenosyl-L-methionine + 5-hydroxyuridine(34) in tRNA = 5-carboxymethoxyuridine(34) in tRNA + S-adenosyl-L-homocysteine + H(+). Functionally, catalyzes carboxymethyl transfer from carboxy-S-adenosyl-L-methionine (Cx-SAM) to 5-hydroxyuridine (ho5U) to form 5-carboxymethoxyuridine (cmo5U) at position 34 in tRNAs. In Salmonella typhimurium (strain LT2 / SGSC1412 / ATCC 700720), this protein is tRNA U34 carboxymethyltransferase.